We begin with the raw amino-acid sequence, 318 residues long: Methionyl-tRNA formyltransferase (318 aa).

120 to 123 (SLLP) is a binding site for (6S)-5,6,7,8-tetrahydrofolate.

Belongs to the Fmt family.

It carries out the reaction L-methionyl-tRNA(fMet) + (6R)-10-formyltetrahydrofolate = N-formyl-L-methionyl-tRNA(fMet) + (6S)-5,6,7,8-tetrahydrofolate + H(+). Its function is as follows. Attaches a formyl group to the free amino group of methionyl-tRNA(fMet). The formyl group appears to play a dual role in the initiator identity of N-formylmethionyl-tRNA by promoting its recognition by IF2 and preventing the misappropriation of this tRNA by the elongation apparatus. The chain is Methionyl-tRNA formyltransferase from Variovorax paradoxus (strain S110).